We begin with the raw amino-acid sequence, 428 residues long: Phosphoribosylamine--glycine ligase (428 aa).

An ATP-grasp domain is found at 107–313; sequence KQVMKTYNIP…LVNVIESLLD (207 aa). 133-194 contributes to the ATP binding site; sequence VEAEGVPIVI…EEYLEGEELS (62 aa). Mg(2+)-binding residues include E283 and N285.

The protein belongs to the GARS family. Mg(2+) serves as cofactor. Requires Mn(2+) as cofactor.

It carries out the reaction 5-phospho-beta-D-ribosylamine + glycine + ATP = N(1)-(5-phospho-beta-D-ribosyl)glycinamide + ADP + phosphate + H(+). It functions in the pathway purine metabolism; IMP biosynthesis via de novo pathway; N(1)-(5-phospho-D-ribosyl)glycinamide from 5-phospho-alpha-D-ribose 1-diphosphate: step 2/2. This chain is Phosphoribosylamine--glycine ligase, found in Halalkalibacterium halodurans (strain ATCC BAA-125 / DSM 18197 / FERM 7344 / JCM 9153 / C-125) (Bacillus halodurans).